An 847-amino-acid chain; its full sequence is DNA mismatch repair protein MutS (847 aa).

602 to 609 provides a ligand contact to ATP; that stretch reads GPNMSGKS. Residues 788–807 form a disordered region; sequence EKREASLPASRTDSQKVSEQ. Over residues 796–807 the composition is skewed to polar residues; that stretch reads ASRTDSQKVSEQ.

Belongs to the DNA mismatch repair MutS family.

Functionally, this protein is involved in the repair of mismatches in DNA. It is possible that it carries out the mismatch recognition step. This protein has a weak ATPase activity. In Streptococcus gordonii (strain Challis / ATCC 35105 / BCRC 15272 / CH1 / DL1 / V288), this protein is DNA mismatch repair protein MutS.